Consider the following 100-residue polypeptide: Large ribosomal subunit protein uL23 (100 aa).

Belongs to the universal ribosomal protein uL23 family. In terms of assembly, part of the 50S ribosomal subunit. Contacts protein L29, and trigger factor when it is bound to the ribosome.

One of the early assembly proteins it binds 23S rRNA. One of the proteins that surrounds the polypeptide exit tunnel on the outside of the ribosome. Forms the main docking site for trigger factor binding to the ribosome. The chain is Large ribosomal subunit protein uL23 from Mycobacterium ulcerans (strain Agy99).